Consider the following 226-residue polypeptide: Probable endolytic peptidoglycan transglycosylase RlpA (226 aa).

The first 26 residues, 1–26, serve as a signal peptide directing secretion; the sequence is MERFLGFRTPLGALGVVILLTLILSS. The N-palmitoyl cysteine moiety is linked to residue Cys27. Cys27 is lipidated: S-diacylglycerol cysteine.

It belongs to the RlpA family.

The protein resides in the cell membrane. In terms of biological role, lytic transglycosylase with a strong preference for naked glycan strands that lack stem peptides. The protein is Probable endolytic peptidoglycan transglycosylase RlpA of Aquifex aeolicus (strain VF5).